A 290-amino-acid polypeptide reads, in one-letter code: 33 kDa chaperonin (290 aa).

Cystine bridges form between cysteine 235-cysteine 237 and cysteine 268-cysteine 271.

This sequence belongs to the HSP33 family. Post-translationally, under oxidizing conditions two disulfide bonds are formed involving the reactive cysteines. Under reducing conditions zinc is bound to the reactive cysteines and the protein is inactive.

It localises to the cytoplasm. Functionally, redox regulated molecular chaperone. Protects both thermally unfolding and oxidatively damaged proteins from irreversible aggregation. Plays an important role in the bacterial defense system toward oxidative stress. The chain is 33 kDa chaperonin from Streptococcus pyogenes serotype M18 (strain MGAS8232).